We begin with the raw amino-acid sequence, 247 residues long: Epidermal cell differentiation inhibitor (247 aa).

Residues 1-35 (MKNKLLFKIFLSLSLALSVYSINDKIIEVSNTSLA) form the signal peptide. Residues 39–247 (KNFTDLDEAT…IIITAIVFKK (209 aa)) enclose the TR mART core domain. Catalysis depends on residues Arg-120, Ser-173, and Glu-215.

To ADP-ribosyltransferase C3 of Clostridium.

Its function is as follows. Inhibits terminal differentiation of cultured mouse keratinocytes. In culture, also inhibits the differentiation of human keratinocytes. Probable ADP-ribosyltransferase. The chain is Epidermal cell differentiation inhibitor from Staphylococcus aureus.